The following is a 659-amino-acid chain: Cytochrome bo(3) ubiquinol oxidase subunit 1 (659 aa).

Residues 1-14 (MFGKLTLKAIPVDE) are Extracellular-facing. A helical transmembrane segment spans residues 15-35 (PIIMVTYISIILIALFISFSI). The Cytoplasmic portion of the chain corresponds to 36 to 58 (TYFKKWKYLWYEWFTTVDHKKIS). Residues 59–79 (IMYGILAFIMLFRGFVDAILM) form a helical membrane-spanning segment. Residues Arg-71, Asp-75, and His-98 each contribute to the a ubiquinone site. The Extracellular portion of the chain corresponds to 80-106 (RTQQVIASSGNTGFLPPHHYDQIFTAH). His-106 is a heme b binding site. The chain crosses the membrane as a helical span at residues 107 to 127 (GVIMIFFVAMPLVIGLMNLVV). Residues 128 to 145 (PLQIGARDVAFPFLNNLS) lie on the Cytoplasmic side of the membrane. A helical membrane pass occupies residues 146 to 166 (FWLNVSGAILLTLSLGIGEFA). At 167–189 (QTGWLAYPPLSEVKYSPGVGVDY) the chain is on the extracellular side. A heme b-binding site is contributed by Trp-170. Residues 190-210 (WIWSLQISGVGTTLTGINFLI) traverse the membrane as a helical segment. Residues 211–225 (TILKMRAPGMCFFKM) are Cytoplasmic-facing. Residues 226–246 (PVFTWAALCTNILIVISFPVL) form a helical membrane-spanning segment. The Extracellular segment spans residues 247-277 (TTTLLLLTLDRCFDFHFFTNNFGGNPMMYVN). A helical membrane pass occupies residues 278-298 (LIWIWGHPEVYILVLPVFGVF). His-284 serves as a coordination point for Cu(2+). Positions 284 to 288 (HPEVY) form a cross-link, 1'-histidyl-3'-tyrosine (His-Tyr). Residue Tyr-288 coordinates Fe(II)-heme o. Residues 299–309 (SEVVATFSKKR) lie on the Cytoplasmic side of the membrane. The chain crosses the membrane as a helical span at residues 310 to 330 (LFGYVSLVWATLAITILSFIV). The Extracellular portion of the chain corresponds to 331–347 (WLHHFFTMGAGSNVNAF). Cu(2+)-binding residues include His-333 and His-334. The chain crosses the membrane as a helical span at residues 348–368 (FGITTMIIAIPTGVKIFNWLF). The Cytoplasmic segment spans residues 369–380 (TMYQGRVHMHSS). A helical membrane pass occupies residues 381 to 401 (MLWTIGFLITFSIGGMTGVLL). Residues 402–413 (SIPPADFILHNS) lie on the Extracellular side of the membrane. Positions 411 and 419 each coordinate Fe(II)-heme o. The helical transmembrane segment at 414–434 (LFLVAHFHNVIIGGVVFGCFA) threads the bilayer. His-421 contributes to the heme b binding site. Topologically, residues 435–456 (GINYWFPKLFGFILNELWGKRA) are cytoplasmic. The helical transmembrane segment at 457–477 (FWFWIIGFFTAFMPLYFLGFM) threads the bilayer. At 478-490 (GMTRRLSQNIDIE) the chain is on the extracellular side. 2 residues coordinate heme b: Arg-481 and Arg-482. The helical transmembrane segment at 491 to 511 (FHFLLSIAAIGAILIGIGILC) threads the bilayer. At 512–580 (QIIQFWVSVR…KNQVQKKQYS (69 aa)) the chain is on the cytoplasmic side. The chain crosses the membrane as a helical span at residues 581–601 (AIHMPKNTGLGIFISFFSLLF). Residues 602–605 (GFSA) lie on the Extracellular side of the membrane. A helical transmembrane segment spans residues 606–626 (VWNIIWLSFLSFLVVIISLIF). The Cytoplasmic portion of the chain corresponds to 627–659 (KSIDENTEYTVSVKEIESIENRHLENVQKAGLK).

The protein belongs to the heme-copper respiratory oxidase family. In terms of assembly, the cytochrome bo(3) ubiquinol oxidase complex is a heterooctamer of two A chains, two B chains, two C chains and two D chains. Cu(2+) serves as cofactor. Requires heme b as cofactor. It depends on Fe(II)-heme o as a cofactor.

Its subcellular location is the cell membrane. The enzyme catalyses 2 a ubiquinol + O2 + n H(+)(in) = 2 a ubiquinone + 2 H2O + n H(+)(out). Its function is as follows. Cytochrome bo(3) ubiquinol oxidase is the terminal enzyme in the aerobic respiratory chain. Catalyzes the four-electron reduction of O2 to water, using a ubiquinol as a membrane soluble electron donor for molecular oxygen reduction. Has proton pump activity across the membrane in addition to electron transfer, pumping 2 protons/electron and generating a proton motive force. All the redox centers of this enzyme complex are located within the largest subunit, subunit I. Protons are probably pumped via D- and K- channels found in this subunit. This Buchnera aphidicola subsp. Schizaphis graminum (strain Sg) protein is Cytochrome bo(3) ubiquinol oxidase subunit 1 (cyoB).